The sequence spans 499 residues: Glycerol kinase (499 aa).

Threonine 12 serves as a coordination point for ADP. ATP is bound by residues threonine 12, threonine 13, and serine 14. Threonine 12 provides a ligand contact to sn-glycerol 3-phosphate. Residue arginine 16 coordinates ADP. Residues arginine 82, glutamate 83, tyrosine 134, and aspartate 243 each contribute to the sn-glycerol 3-phosphate site. Glycerol contacts are provided by arginine 82, glutamate 83, tyrosine 134, aspartate 243, and glutamine 244. ADP contacts are provided by threonine 265 and glycine 308. ATP is bound by residues threonine 265, glycine 308, glutamine 312, and glycine 411. An ADP-binding site is contributed by glycine 411.

Belongs to the FGGY kinase family.

The catalysed reaction is glycerol + ATP = sn-glycerol 3-phosphate + ADP + H(+). It functions in the pathway polyol metabolism; glycerol degradation via glycerol kinase pathway; sn-glycerol 3-phosphate from glycerol: step 1/1. Its activity is regulated as follows. Inhibited by fructose 1,6-bisphosphate (FBP). Its function is as follows. Key enzyme in the regulation of glycerol uptake and metabolism. Catalyzes the phosphorylation of glycerol to yield sn-glycerol 3-phosphate. The chain is Glycerol kinase from Agrobacterium fabrum (strain C58 / ATCC 33970) (Agrobacterium tumefaciens (strain C58)).